The chain runs to 465 residues: Lipase 10 (465 aa).

The first 16 residues, 1–16 (MKTLLIFLAFLSSIFA), serve as a signal peptide directing secretion. Cys112 and Cys285 are joined by a disulfide. The Charge relay system role is filled by Ser196. N-linked (GlcNAc...) asparagine glycans are attached at residues Asn231 and Asn319. Active-site charge relay system residues include Asp348 and His381. Cys364 and Cys409 are joined by a disulfide.

The protein belongs to the AB hydrolase superfamily. Lipase family. Class Lip subfamily.

Its subcellular location is the secreted. It catalyses the reaction a triacylglycerol + H2O = a diacylglycerol + a fatty acid + H(+). In terms of biological role, secreted lipase that is able to hydrolyze both the neutral triacylglycerols and the monopalmitate ester Tween 40, allowing the use of hydrolyzed products as carbon sources. Has broad lipolytic activity, which may be important for colonization and subsequent infection, therefore contributing to the persistence and virulence in human tissue. In Candida albicans (strain SC5314 / ATCC MYA-2876) (Yeast), this protein is Lipase 10.